Here is a 338-residue protein sequence, read N- to C-terminus: Solute carrier family 35 member G3 (338 aa).

The tract at residues 1-24 is disordered; the sequence is MAGSHPYFNQPDSTHPSPPSAPPS. The next 9 helical transmembrane spans lie at 37 to 57, 67 to 87, 105 to 125, 160 to 180, 185 to 205, 221 to 241, 250 to 270, 281 to 301, and 305 to 325; these read TSGL…VGPL, LPSL…ALLL, FFCA…VQVV, CGLL…LWTL, TGVY…ALSL, TVAF…LFVL, LLSW…FTCV, LVCA…YYML, and VAPS…IITA. Residues 49–174 form the EamA 1 domain; sequence LPAGFVGPLS…CILGLIIIVG (126 aa). The EamA 2 domain maps to 272 to 325; that stretch reads YAVTKAHPALVCAVLHSEVVVALILQYYMLHETVAPSDIVAAGVVLGSIAIITA.

The protein belongs to the SLC35G solute transporter family. Expressed in testis.

The protein localises to the membrane. This Homo sapiens (Human) protein is Solute carrier family 35 member G3 (SLC35G3).